Here is a 556-residue protein sequence, read N- to C-terminus: Glutamine--tRNA ligase (556 aa).

The short motif at 34 to 44 is the 'HIGH' region element; sequence PEPNGYLHIGH. ATP contacts are provided by residues 35–37 and 41–47; these read EPN and HIGHAKS. Residues Asp-67 and Tyr-212 each coordinate L-glutamine. ATP contacts are provided by residues Thr-231, 261-262, and 269-271; these read RL and MSK. The short motif at 268 to 272 is the 'KMSKS' region element; sequence IMSKR.

It belongs to the class-I aminoacyl-tRNA synthetase family. Monomer.

Its subcellular location is the cytoplasm. It catalyses the reaction tRNA(Gln) + L-glutamine + ATP = L-glutaminyl-tRNA(Gln) + AMP + diphosphate. The sequence is that of Glutamine--tRNA ligase from Sodalis glossinidius (strain morsitans).